We begin with the raw amino-acid sequence, 613 residues long: WD40 repeat-containing protein HOS15 (613 aa).

Residues 5 to 37 (TSVELNFLVFRYLQESGFTHAAFTLGYEAGINK) form the LisH domain. 2 disordered regions span residues 101–174 (KKRK…REKM) and 193–214 (EIEREREREKIEREKSHEKQLG). 8 WD repeats span residues 263–302 (GHTSEVCACAWSPSASLLASGSGDATARIWSIPEGSFKAV), 322–362 (EKSK…STLS), 363–402 (KHKGPIFSLKWNKKGDYLLTGSVDRTAVVWDVKAEEWKQQ), 405–443 (FHSGPTLDVDWRNNVSFATSSTDSMIYLCKIGETRPAKT), 446–485 (GHQGEVNCVKWDPTGSLLASCSDDSTAKIWNIKQSTFVHD), 488–536 (EHTK…MLCS), 539–580 (GHRE…KTYT), and 582–613 (NGGIFEVCWNKEGNKIAACFADNSVCVLDFRM).

The protein localises to the nucleus. Its function is as follows. Acts as a repressor of cold stress-regulated gene expression. Interacts specifically with and promotes deacetylation of histone H4. Plays a role in gene regulation for plant acclimation and tolerance to cold stress. The sequence is that of WD40 repeat-containing protein HOS15 from Arabidopsis thaliana (Mouse-ear cress).